A 212-amino-acid chain; its full sequence is MTQGAVKTTGKRSRAVSAKKKAILSAALDTFSQFGFHGTRLEQIAELAGVSKTNLLYYFPSKEALYIAVLRQILDIWLAPLKAFREDFAPLAAIKEYIRLKLEVSRDYPQASRLFCMEMLAGAPLLMDELTGDLKSLIDEKSALIAGWVKSGKLAPIDPQHLIFMIWASTQHYADFAPQVEAVTGATLRDEVFFNQTVENVQRIIIEGIRPR.

Positions 17-77 constitute an HTH tetR-type domain; that stretch reads SAKKKAILSA…AVLRQILDIW (61 aa). Residues 39–58 constitute a DNA-binding region (H-T-H motif); the sequence is TRLEQIAELAGVSKTNLLYY.

As to quaternary structure, homodimer.

In terms of biological role, master transcription regulator which represses the degradation of pyrimidines (rutABCDEFG) and purines (gcl operon) for maintenance of metabolic balance between pyrimidines and purines. It also regulates the synthesis of pyrimidine nucleotides and arginine from glutamine (carAB) and the supply of glutamate (gadABWX). This chain is HTH-type transcriptional regulator RutR (rutR), found in Escherichia coli O157:H7.